Here is a 238-residue protein sequence, read N- to C-terminus: Ribonuclease PH (238 aa).

Residues arginine 86 and 124–126 (GTR) each bind phosphate.

Belongs to the RNase PH family. Homohexameric ring arranged as a trimer of dimers.

It carries out the reaction tRNA(n+1) + phosphate = tRNA(n) + a ribonucleoside 5'-diphosphate. Its function is as follows. Phosphorolytic 3'-5' exoribonuclease that plays an important role in tRNA 3'-end maturation. Removes nucleotide residues following the 3'-CCA terminus of tRNAs; can also add nucleotides to the ends of RNA molecules by using nucleoside diphosphates as substrates, but this may not be physiologically important. Probably plays a role in initiation of 16S rRNA degradation (leading to ribosome degradation) during starvation. In Klebsiella pneumoniae (strain 342), this protein is Ribonuclease PH.